The following is an 845-amino-acid chain: Taste receptor type 1 member 3 (845 aa).

Positions 1–18 are cleaved as a signal peptide; the sequence is MAGLMLLSLMALLGLGAG. Topologically, residues 19–568 are extracellular; it reads APLCLSRQLR…FLAWGQPAVL (550 aa). N-linked (GlcNAc...) asparagine glycosylation is found at Asn-128 and Asn-262. Residues 569–589 form a helical membrane-spanning segment; the sequence is VLLILLALALGLVLVALGLFI. The Cytoplasmic segment spans residues 590–601; sequence RHRDSPLVQASG. The chain crosses the membrane as a helical span at residues 602–622; sequence GPRACFGLACLGLVCLSVLLF. At 623–637 the chain is on the extracellular side; it reads PGQPGPASCLAQQPL. The helical transmembrane segment at 638–658 threads the bilayer; it reads LHLPLTGCLSTLFLQAAQIFV. Topologically, residues 659–680 are cytoplasmic; that stretch reads GSELPSSWADQLRRCLQGPWAW. Residues 681-701 form a helical membrane-spanning segment; it reads LLVLLALLAEAALCAWYLVAF. The Extracellular portion of the chain corresponds to 702 to 727; that stretch reads PPEVVTDWWVLPTQVLVHCRMRSWIS. A helical transmembrane segment spans residues 728–748; it reads FGLLHAINAMLAFLCFLGTFL. Residues 749 to 760 lie on the Cytoplasmic side of the membrane; it reads VQSRPGRYNGAR. A helical membrane pass occupies residues 761–781; that stretch reads GLTFAMLAYFITWISFVPLFA. At 782-789 the chain is on the extracellular side; it reads NVHVAYQP. Residues 790 to 810 form a helical membrane-spanning segment; the sequence is TVQMAAILLCALGILATFHLP. The Cytoplasmic portion of the chain corresponds to 811-845; that stretch reads KCYLLLQQLELNNPEFFLGDDARGQGSSGSGGKET.

The protein belongs to the G-protein coupled receptor 3 family. TAS1R subfamily. Forms homodimers or heterodimers with TAS1R1 and TAS1R2.

It is found in the cell membrane. In terms of biological role, putative taste receptor. TAS1R1/TAS1R3 responds to the umami taste stimulus (the taste of monosodium glutamate). TAS1R2/TAS1R3 recognizes diverse natural and synthetic sweeteners. TAS1R3 is essential for the recognition and response to the disaccharide trehalose. Sequence differences within and between species can significantly influence the selectivity and specificity of taste responses. This is Taste receptor type 1 member 3 (TAS1R3) from Canis lupus familiaris (Dog).